The chain runs to 300 residues: Probable lipid kinase YegS-like (300 aa).

The DAGKc domain maps to M1–Y129. ATP contacts are provided by residues T38, G64–D70, and T92. Mg(2+)-binding residues include L210, D213, and L215. E272 acts as the Proton acceptor in catalysis.

Belongs to the diacylglycerol/lipid kinase family. YegS lipid kinase subfamily. It depends on Mg(2+) as a cofactor. Ca(2+) serves as cofactor.

It localises to the cytoplasm. Probably phosphorylates lipids; the in vivo substrate is unknown. This is Probable lipid kinase YegS-like from Alcanivorax borkumensis (strain ATCC 700651 / DSM 11573 / NCIMB 13689 / SK2).